The sequence spans 490 residues: Betaine aldehyde dehydrogenase (490 aa).

Positions 26, 27, and 93 each coordinate K(+). 150-152 (GAW) contacts NAD(+). The Charge relay system role is filled by Lys162. 176–179 (KPSE) is an NAD(+) binding site. K(+) is bound at residue Val180. 230–233 (GVAS) is an NAD(+) binding site. Leu246 serves as a coordination point for K(+). The Proton acceptor role is filled by Glu252. Gly254, Cys286, and Glu387 together coordinate NAD(+). Catalysis depends on Cys286, which acts as the Nucleophile. Cys286 bears the Cysteine sulfenic acid (-SOH) mark. 2 residues coordinate K(+): Lys457 and Gly460. Glu464 acts as the Charge relay system in catalysis.

This sequence belongs to the aldehyde dehydrogenase family. Dimer of dimers. The cofactor is K(+).

It catalyses the reaction betaine aldehyde + NAD(+) + H2O = glycine betaine + NADH + 2 H(+). It functions in the pathway amine and polyamine biosynthesis; betaine biosynthesis via choline pathway; betaine from betaine aldehyde: step 1/1. Involved in the biosynthesis of the osmoprotectant glycine betaine. Catalyzes the irreversible oxidation of betaine aldehyde to the corresponding acid. This Escherichia coli (strain ATCC 8739 / DSM 1576 / NBRC 3972 / NCIMB 8545 / WDCM 00012 / Crooks) protein is Betaine aldehyde dehydrogenase.